The following is a 377-amino-acid chain: UPF0754 membrane protein BPUM_0927 (377 aa).

Transmembrane regions (helical) follow at residues 1-21 and 357-377; these read MNIF…GAAT and FLGG…VTLF.

It belongs to the UPF0754 family.

The protein resides in the cell membrane. The chain is UPF0754 membrane protein BPUM_0927 from Bacillus pumilus (strain SAFR-032).